The primary structure comprises 168 residues: RNA pyrophosphohydrolase (168 aa).

Residues 8–160 enclose the Nudix hydrolase domain; that stretch reads PYRTCVGIAL…KRPVYERVAK (153 aa). The Nudix box motif lies at 47 to 68; it reads GGVDPGEDAWEAAKRELYEETS.

It belongs to the Nudix hydrolase family. RppH subfamily. A divalent metal cation is required as a cofactor.

In terms of biological role, accelerates the degradation of transcripts by removing pyrophosphate from the 5'-end of triphosphorylated RNA, leading to a more labile monophosphorylated state that can stimulate subsequent ribonuclease cleavage. The chain is RNA pyrophosphohydrolase from Bradyrhizobium sp. (strain ORS 278).